An 812-amino-acid chain; its full sequence is Phenylalanine--tRNA ligase beta subunit (812 aa).

The 117-residue stretch at 39–155 (SKTFAPFTIA…ADAPVGAGYA (117 aa)) folds into the tRNA-binding domain. Positions 405–480 (PEDRVIDFPL…RIVGVDKVPM (76 aa)) constitute a B5 domain. Mg(2+) is bound by residues Asp458, Asp464, Glu467, and Glu468. The 94-residue stretch at 718-811 (PAFQPVSRDF…VAKRTGGSLR (94 aa)) folds into the FDX-ACB domain.

Belongs to the phenylalanyl-tRNA synthetase beta subunit family. Type 1 subfamily. As to quaternary structure, tetramer of two alpha and two beta subunits. Mg(2+) is required as a cofactor.

It localises to the cytoplasm. The enzyme catalyses tRNA(Phe) + L-phenylalanine + ATP = L-phenylalanyl-tRNA(Phe) + AMP + diphosphate + H(+). The sequence is that of Phenylalanine--tRNA ligase beta subunit from Nitrobacter winogradskyi (strain ATCC 25391 / DSM 10237 / CIP 104748 / NCIMB 11846 / Nb-255).